A 760-amino-acid polypeptide reads, in one-letter code: ATP-dependent DNA helicase Hel308 (760 aa).

ATP contacts are provided by residues Q28 and 46–53 (IPTASGKT). The 167-residue stretch at 33-199 (EMGLLEKKNL…WLGAALVLSE (167 aa)) folds into the Helicase ATP-binding domain. Positions 144–147 (DEIH) match the DEAH box motif. Residues 232–426 (AVNLVLDTIK…SKLGTENALR (195 aa)) form the Helicase C-terminal domain.

This sequence belongs to the helicase family. Hel308 subfamily. As to quaternary structure, monomer.

The catalysed reaction is Couples ATP hydrolysis with the unwinding of duplex DNA by translocating in the 3'-5' direction.. It carries out the reaction ATP + H2O = ADP + phosphate + H(+). DNA-dependent ATPase and 3'-5' DNA helicase that may be involved in repair of stalled replication forks. In Methanococcoides burtonii (strain DSM 6242 / NBRC 107633 / OCM 468 / ACE-M), this protein is ATP-dependent DNA helicase Hel308.